We begin with the raw amino-acid sequence, 336 residues long: Large ribosomal subunit protein uL1m (336 aa).

A mitochondrion-targeting transit peptide spans 1–50; sequence MAAAVRCLRRVLIHHQRHCLCKMASQASLYPCSVNSLLHNRHFAAAAAAA. Serine 85 carries the phosphoserine modification.

It belongs to the universal ribosomal protein uL1 family.

It is found in the mitochondrion. This Mus musculus (Mouse) protein is Large ribosomal subunit protein uL1m (Mrpl1).